Reading from the N-terminus, the 208-residue chain is Pyridoxine/pyridoxamine 5'-phosphate oxidase (208 aa).

FMN-binding positions include 55–60 (RMVLLK), 70–71 (YT), lysine 77, and glutamine 99. Lysine 60 serves as a coordination point for substrate. The substrate site is built by tyrosine 117, arginine 121, and serine 125. FMN contacts are provided by residues 134 to 135 (QS) and tryptophan 180. 186 to 188 (RIH) is a substrate binding site. An FMN-binding site is contributed by arginine 190.

Belongs to the pyridoxamine 5'-phosphate oxidase family. As to quaternary structure, homodimer. It depends on FMN as a cofactor.

It carries out the reaction pyridoxamine 5'-phosphate + O2 + H2O = pyridoxal 5'-phosphate + H2O2 + NH4(+). It catalyses the reaction pyridoxine 5'-phosphate + O2 = pyridoxal 5'-phosphate + H2O2. Its pathway is cofactor metabolism; pyridoxal 5'-phosphate salvage; pyridoxal 5'-phosphate from pyridoxamine 5'-phosphate: step 1/1. It participates in cofactor metabolism; pyridoxal 5'-phosphate salvage; pyridoxal 5'-phosphate from pyridoxine 5'-phosphate: step 1/1. Its function is as follows. Catalyzes the oxidation of either pyridoxine 5'-phosphate (PNP) or pyridoxamine 5'-phosphate (PMP) into pyridoxal 5'-phosphate (PLP). In Pelagibacter ubique (strain HTCC1062), this protein is Pyridoxine/pyridoxamine 5'-phosphate oxidase.